The sequence spans 215 residues: N-(5'-phosphoribosyl)anthranilate isomerase (215 aa).

It belongs to the TrpF family.

It catalyses the reaction N-(5-phospho-beta-D-ribosyl)anthranilate = 1-(2-carboxyphenylamino)-1-deoxy-D-ribulose 5-phosphate. Its pathway is amino-acid biosynthesis; L-tryptophan biosynthesis; L-tryptophan from chorismate: step 3/5. In Cellvibrio japonicus (strain Ueda107) (Pseudomonas fluorescens subsp. cellulosa), this protein is N-(5'-phosphoribosyl)anthranilate isomerase.